Consider the following 1179-residue polypeptide: MLDVNFFDSIQIGLASPERIRQWSRGEVKKPETINYRTLRPERDGLFCERIFGPTRDWECHCGKYKRVRYKGIVCDRCGVEVTRAKVRRERMGHIELAAPVSHIWYFKGIPSRMGLILDISPRALEKVLYFAAYIVTDPGDTPLMEKQLLTENEYREYREKYGDAFKAGMGAEAVKVLLEKLDLDKMAEELRHEVRTVSGQRKIRATRRLEVVEAFRKSGNRPEWMILEVIPVIPPDLRPMVQLDGGRFATSDLNDLYRRVINRNNRLKRLLDLGAPDIIVRNEKRMLQEAVDALIDNGRRGRPVTGPGNRPLKSLSDMLKGKQGRFRQNLLGKRVDYSGRSVIVVGPHLKLHQCGLPKEMALELFKPFVMKKLVNDGHAHNIKSAKRMVERMRPEVWDVLEEVIREHPVLLNRAPTLHRLGIQAFEPVLVEGRAIQIHPLVCTAYNADFDGDQMAVHVPLSAEAQAEARILMLAAHNILNPKDGQPVITPSKDMLLGSYYLTLPKPDSEPKMRFSHPHEALLAYQNGLVELHDWVEIRFPEPPKDLEPYSEEWWEHPDNWNTVSGKRIKTTIGRMIFNEVLHPKLRYINETIEKKWMGKIIDMAYRKLGTVKTAEQTDKIKDLGFRFATQSGATIAISDIKVPGDKDEILRQAEKEVDQVERNYRRGLITNDERYQRVIAIWSEAKEKVTSTLVKTMEDFNPVNMMMKSGARGNISQITQLAGMRGLMADPSGKIVELPVKANFREGLTVLEYFLSTHGTRKGLADTSLRTADSGYLTRRLVDVAQDVIVREDDCGTTAGITWTEEVDQFGNVIEPITPHIVGRVALNDIVHPETGEIIVYANEMIDEDLAEQILAAGIKEVTIRSVLTCRTRYGVCRACYGRNLATGRLVDVGEAVGIIAAQSIGEPGTQLTMRTFHTGGVAGDDITQGLPRVEELFEARKPKGQAIIAELDGEVSITEQKGRREITITSEDGESVTYSIPYGARVKVRSGQFVEAGDELTEGSVNPHDLLRVKGLRGVQRYLLREVQKVYNLQGVDINDKHIEIMVRQMLRKVKVEDPGDTDLLPGGFVDIFDFEDENERVIMEGGVPAVARPMLLGITKASLATDSFLSAASFQETTRVLTDAAIKGKRDPLLGLKENVIIGKLIPAGTGMGRYRNIKLFTEDDVYAEHLQGADD.

Residues C60, C62, C75, and C78 each coordinate Zn(2+). Mg(2+) is bound by residues D449, D451, and D453. Residues C796, C871, C878, and C881 each coordinate Zn(2+).

It belongs to the RNA polymerase beta' chain family. As to quaternary structure, the RNAP catalytic core consists of 2 alpha, 1 beta, 1 beta' and 1 omega subunit. When a sigma factor is associated with the core the holoenzyme is formed, which can initiate transcription. Mg(2+) serves as cofactor. Zn(2+) is required as a cofactor.

It catalyses the reaction RNA(n) + a ribonucleoside 5'-triphosphate = RNA(n+1) + diphosphate. Functionally, DNA-dependent RNA polymerase catalyzes the transcription of DNA into RNA using the four ribonucleoside triphosphates as substrates. The sequence is that of DNA-directed RNA polymerase subunit beta' from Symbiobacterium thermophilum (strain DSM 24528 / JCM 14929 / IAM 14863 / T).